The chain runs to 97 residues: UPF0235 protein LHK_03181 (97 aa).

Belongs to the UPF0235 family.

The polypeptide is UPF0235 protein LHK_03181 (Laribacter hongkongensis (strain HLHK9)).